The chain runs to 192 residues: Xanthine phosphoribosyltransferase 2 (192 aa).

Xanthine-binding residues include L20 and N27. Residue 131–135 (ANACA) coordinates 5-phospho-alpha-D-ribose 1-diphosphate. K159 is a xanthine binding site.

Belongs to the purine/pyrimidine phosphoribosyltransferase family. Xpt subfamily. In terms of assembly, homodimer.

It is found in the cytoplasm. The enzyme catalyses XMP + diphosphate = xanthine + 5-phospho-alpha-D-ribose 1-diphosphate. Its pathway is purine metabolism; XMP biosynthesis via salvage pathway; XMP from xanthine: step 1/1. Functionally, converts the preformed base xanthine, a product of nucleic acid breakdown, to xanthosine 5'-monophosphate (XMP), so it can be reused for RNA or DNA synthesis. This Clostridium perfringens (strain ATCC 13124 / DSM 756 / JCM 1290 / NCIMB 6125 / NCTC 8237 / Type A) protein is Xanthine phosphoribosyltransferase 2.